Consider the following 138-residue polypeptide: Large ribosomal subunit protein uL16 (138 aa).

The span at 1-19 shows a compositional bias: basic residues; it reads MLIPRKVAHRKQHHPKRTG. A disordered region spans residues 1-22; sequence MLIPRKVAHRKQHHPKRTGAAK.

Belongs to the universal ribosomal protein uL16 family. In terms of assembly, part of the 50S ribosomal subunit.

Its function is as follows. Binds 23S rRNA and is also seen to make contacts with the A and possibly P site tRNAs. This chain is Large ribosomal subunit protein uL16, found in Parafrankia sp. (strain EAN1pec).